The primary structure comprises 242 residues: Derlin-1 (242 aa).

At methionine 1–threonine 20 the chain is on the cytoplasmic side. The chain crosses the membrane as a helical span at residues leucine 21–leucine 41. At tyrosine 42–leucine 55 the chain is on the lumenal side. The chain crosses the membrane as a helical span at residues phenylalanine 56 to isoleucine 76. Residues alanine 77 to aspartate 94 lie on the Cytoplasmic side of the membrane. A helical transmembrane segment spans residues phenylalanine 95 to leucine 115. At aspartate 116–alanine 157 the chain is on the lumenal side. Residues methionine 158–valine 178 traverse the membrane as a helical segment. Topologically, residues glycine 179 to glutamine 242 are cytoplasmic.

Belongs to the derlin family. In terms of tissue distribution, seedling shoots and roots.

It is found in the endoplasmic reticulum membrane. May be involved in the degradation process of specific misfolded endoplasmic reticulum (ER) luminal proteins. The sequence is that of Derlin-1 (DER1) from Oryza sativa subsp. japonica (Rice).